We begin with the raw amino-acid sequence, 61 residues long: Putative antitoxin VapB21 (61 aa).

It belongs to the UPF0165 family.

Possibly the antitoxin component of a type II toxin-antitoxin (TA) system. Its cognate toxin is VapC21 (Potential). In Archaeoglobus fulgidus (strain ATCC 49558 / DSM 4304 / JCM 9628 / NBRC 100126 / VC-16), this protein is Putative antitoxin VapB21 (vapB21).